Here is a 238-residue protein sequence, read N- to C-terminus: MSEVTTAEFNEDGVYLRKVRSFVLREGRLTTGQAKALESFWPTMGLDYSPQAINFTEVFGREADTVLEIGFGMGASLVEMAANAPELNFIGVEVHKPGVGACLGEAGNAGISNLRVYHHDAVEVLENAIPDSSLARVQLFFPDPWHKKRHHKRRIVQPEFVELLRRKLKIGGVFHMATDWENYAEHMLEVMSAAPGYQNQSDTQTYVPRPDHRPLTKFENRGQRLGHGVWDLMFERVE.

The S-adenosyl-L-methionine site is built by glutamate 68, glutamate 93, aspartate 120, and aspartate 143. Residue aspartate 143 is part of the active site. Residues lysine 147, aspartate 179, and 216 to 219 (TKFE) each bind substrate.

It belongs to the class I-like SAM-binding methyltransferase superfamily. TrmB family.

The catalysed reaction is guanosine(46) in tRNA + S-adenosyl-L-methionine = N(7)-methylguanosine(46) in tRNA + S-adenosyl-L-homocysteine. Its pathway is tRNA modification; N(7)-methylguanine-tRNA biosynthesis. Functionally, catalyzes the formation of N(7)-methylguanine at position 46 (m7G46) in tRNA. This chain is tRNA (guanine-N(7)-)-methyltransferase, found in Shewanella amazonensis (strain ATCC BAA-1098 / SB2B).